Consider the following 123-residue polypeptide: UPF0738 protein BcerKBAB4_1107 (123 aa).

This sequence belongs to the UPF0738 family.

The protein is UPF0738 protein BcerKBAB4_1107 of Bacillus mycoides (strain KBAB4) (Bacillus weihenstephanensis).